The primary structure comprises 275 residues: Urease accessory protein UreD (275 aa).

This sequence belongs to the UreD family. UreD, UreF and UreG form a complex that acts as a GTP-hydrolysis-dependent molecular chaperone, activating the urease apoprotein by helping to assemble the nickel containing metallocenter of UreC. The UreE protein probably delivers the nickel.

It is found in the cytoplasm. Functionally, required for maturation of urease via the functional incorporation of the urease nickel metallocenter. In Cereibacter sphaeroides (strain ATCC 17025 / ATH 2.4.3) (Rhodobacter sphaeroides), this protein is Urease accessory protein UreD.